The primary structure comprises 234 residues: Thymidylate kinase (234 aa).

11–18 contacts ATP; sequence GLEGSGKT.

Belongs to the thymidylate kinase family.

It catalyses the reaction dTMP + ATP = dTDP + ADP. Its function is as follows. Phosphorylation of dTMP to form dTDP in both de novo and salvage pathways of dTTP synthesis. In Wigglesworthia glossinidia brevipalpis, this protein is Thymidylate kinase.